We begin with the raw amino-acid sequence, 423 residues long: Deferrochelatase (423 aa).

Positions 1–35 (MQYEDKNGVNEPSRRRLLKGIGALALAGSCPVAHA) form a signal peptide, tat-type signal. Residues 236 to 238 (GTA), histidine 329, 334 to 336 (NPR), and arginine 347 each bind heme b.

This sequence belongs to the DyP-type peroxidase family. EfeB subfamily. As to quaternary structure, the heme-bound EfeB forms a homodimer whereas the apo-form mainly exists as a monomer. Part of a ferrous iron transporter composed of EfeU, EfeO and EfeB. Requires heme b as cofactor. Post-translationally, predicted to be exported by the Tat system. The position of the signal peptide cleavage has not been experimentally proven.

It is found in the periplasm. It catalyses the reaction heme b + 2 H(+) = protoporphyrin IX + Fe(2+). Its function is as follows. Involved in the recovery of exogenous heme iron. Extracts iron from heme while preserving the protoporphyrin ring intact. Also displays peroxidase activity on guaiacol and catechol in vitro. The deferrochelatase activity appears to be closely related to the peroxidation activity, but the link is unclear. This is Deferrochelatase (efeB) from Escherichia coli O157:H7.